Reading from the N-terminus, the 154-residue chain is Myoglobin (154 aa).

Residues 2 to 148 form the Globin domain; the sequence is GLSDGEWQLV…FRNEMAAQYK (147 aa). Ser-4 is subject to Phosphoserine. Nitrite is bound at residue His-65. His-65 provides a ligand contact to O2. Thr-68 carries the post-translational modification Phosphothreonine. Residue His-94 coordinates heme b.

As to quaternary structure, monomeric.

The protein resides in the cytoplasm. Its subcellular location is the sarcoplasm. The catalysed reaction is Fe(III)-heme b-[protein] + nitric oxide + H2O = Fe(II)-heme b-[protein] + nitrite + 2 H(+). It carries out the reaction H2O2 + AH2 = A + 2 H2O. In terms of biological role, monomeric heme protein which primary function is to store oxygen and facilitate its diffusion within muscle tissues. Reversibly binds oxygen through a pentacoordinated heme iron and enables its timely and efficient release as needed during periods of heightened demand. Depending on the oxidative conditions of tissues and cells, and in addition to its ability to bind oxygen, it also has a nitrite reductase activity whereby it regulates the production of bioactive nitric oxide. Under stress conditions, like hypoxia and anoxia, it also protects cells against reactive oxygen species thanks to its pseudoperoxidase activity. The polypeptide is Myoglobin (Bubalus bubalis (Domestic water buffalo)).